Here is a 502-residue protein sequence, read N- to C-terminus: Aspartyl/glutamyl-tRNA(Asn/Gln) amidotransferase subunit B (502 aa).

It belongs to the GatB/GatE family. GatB subfamily. As to quaternary structure, heterotrimer of A, B and C subunits.

It catalyses the reaction L-glutamyl-tRNA(Gln) + L-glutamine + ATP + H2O = L-glutaminyl-tRNA(Gln) + L-glutamate + ADP + phosphate + H(+). The enzyme catalyses L-aspartyl-tRNA(Asn) + L-glutamine + ATP + H2O = L-asparaginyl-tRNA(Asn) + L-glutamate + ADP + phosphate + 2 H(+). Allows the formation of correctly charged Asn-tRNA(Asn) or Gln-tRNA(Gln) through the transamidation of misacylated Asp-tRNA(Asn) or Glu-tRNA(Gln) in organisms which lack either or both of asparaginyl-tRNA or glutaminyl-tRNA synthetases. The reaction takes place in the presence of glutamine and ATP through an activated phospho-Asp-tRNA(Asn) or phospho-Glu-tRNA(Gln). The polypeptide is Aspartyl/glutamyl-tRNA(Asn/Gln) amidotransferase subunit B (Arthrobacter sp. (strain FB24)).